The sequence spans 433 residues: DNA methyltransferase 1-associated protein 1 (433 aa).

A required for nuclear localization region spans residues 1-204 (MSADVRDILD…EVVALLAKAK (204 aa)). Positions 148–197 (NNWSKVQTDHLFDLARRFDLRFIVMADRWNRQQHGTKTVEELKERYYEVV) constitute a Myb-like domain. Residues 186-281 (VEELKERYYE…ADQQNEHASN (96 aa)) adopt a coiled-coil conformation. Positions 252–264 (EARKKERERKTQD) are enriched in basic and acidic residues. Residues 252–305 (EARKKERERKTQDLQKLISQADQQNEHASNTPSTRKYEKKLHKKKVHQQPRPSR) form a disordered region. Residues 268–285 (LISQADQQNEHASNTPST) are compositionally biased toward polar residues. A compositionally biased stretch (basic residues) spans 288–299 (YEKKLHKKKVHQ).

Interacts with Rel. Interacts with akirin and Bap55.

Its subcellular location is the nucleus. The protein localises to the cytoplasm. Involved in transcription repression and activation. Required for larvae and pupal development, and for normal innate immune responses. Involved in modulating the activation of the immune deficiency pathway (Imd), acting either downstream of, or at the level of, the NF-kappa-B factor Rel. Possibly functions with akirin to regulate Rel, and its interaction with the Brahma complex protein Bap55 suggests that it may regulate the IMD pathway at the level of chromatin remodeling. In Drosophila melanogaster (Fruit fly), this protein is DNA methyltransferase 1-associated protein 1.